We begin with the raw amino-acid sequence, 381 residues long: Homoserine O-acetyltransferase (381 aa).

The AB hydrolase-1 domain occupies 47-359 (NAILICHALT…DKGHDAFLLD (313 aa)). S153 acts as the Nucleophile in catalysis. R223 contacts substrate. Active-site residues include D320 and H353. D354 contributes to the substrate binding site.

The protein belongs to the AB hydrolase superfamily. MetX family. Homodimer.

The protein localises to the cytoplasm. The catalysed reaction is L-homoserine + acetyl-CoA = O-acetyl-L-homoserine + CoA. Its pathway is amino-acid biosynthesis; L-methionine biosynthesis via de novo pathway; O-acetyl-L-homoserine from L-homoserine: step 1/1. Its function is as follows. Transfers an acetyl group from acetyl-CoA to L-homoserine, forming acetyl-L-homoserine. This is Homoserine O-acetyltransferase from Acidiphilium cryptum (strain JF-5).